Reading from the N-terminus, the 131-residue chain is MAEKEVRLDKWLWAARFYKTRSIAKAMIESGKVHYNNQRAKVSKIVEVGAMLKLRQGNEEKEIKIIALSDQRRGAPEAQLLYQETESSVKKREEIAWARKNNSLSMPHPDRRPNKKERRDLLKFKHQDKFE.

Residues 6–67 (VRLDKWLWAA…NEEKEIKIIA (62 aa)) form the S4 RNA-binding domain. Residues 98-131 (ARKNNSLSMPHPDRRPNKKERRDLLKFKHQDKFE) form a disordered region. Residues 108 to 131 (HPDRRPNKKERRDLLKFKHQDKFE) show a composition bias toward basic and acidic residues.

The protein belongs to the HSP15 family.

Functionally, involved in the recycling of free 50S ribosomal subunits that still carry a nascent chain. Binds RNA more specifically than DNA. Binds with very high affinity to the free 50S ribosomal subunit. Does not bind it when it is part of the 70S ribosome. The protein is Heat shock protein 15 homolog (hslR) of Haemophilus influenzae (strain ATCC 51907 / DSM 11121 / KW20 / Rd).